A 136-amino-acid polypeptide reads, in one-letter code: Peptide methionine sulfoxide reductase MsrB (136 aa).

The region spanning 6-128 (EVSLYKELTD…NSAALSFTDE (123 aa)) is the MsrB domain. Residues Cys45, Cys48, Cys94, and Cys97 each contribute to the Zn(2+) site. Catalysis depends on Cys117, which acts as the Nucleophile.

It belongs to the MsrB Met sulfoxide reductase family. The cofactor is Zn(2+).

It catalyses the reaction L-methionyl-[protein] + [thioredoxin]-disulfide + H2O = L-methionyl-(R)-S-oxide-[protein] + [thioredoxin]-dithiol. The chain is Peptide methionine sulfoxide reductase MsrB from Photorhabdus laumondii subsp. laumondii (strain DSM 15139 / CIP 105565 / TT01) (Photorhabdus luminescens subsp. laumondii).